The primary structure comprises 288 residues: 4-diphosphocytidyl-2-C-methyl-D-erythritol kinase (288 aa).

Residue lysine 8 is part of the active site. 90-100 contributes to the ATP binding site; the sequence is PVGAGLAGGSS. Residue aspartate 132 is part of the active site.

Belongs to the GHMP kinase family. IspE subfamily.

It carries out the reaction 4-CDP-2-C-methyl-D-erythritol + ATP = 4-CDP-2-C-methyl-D-erythritol 2-phosphate + ADP + H(+). Its pathway is isoprenoid biosynthesis; isopentenyl diphosphate biosynthesis via DXP pathway; isopentenyl diphosphate from 1-deoxy-D-xylulose 5-phosphate: step 3/6. Catalyzes the phosphorylation of the position 2 hydroxy group of 4-diphosphocytidyl-2C-methyl-D-erythritol. In Chlamydia trachomatis serovar D (strain ATCC VR-885 / DSM 19411 / UW-3/Cx), this protein is 4-diphosphocytidyl-2-C-methyl-D-erythritol kinase.